Here is a 408-residue protein sequence, read N- to C-terminus: Acetylornithine aminotransferase (408 aa).

Residues 107-108 and Phe141 contribute to the pyridoxal 5'-phosphate site; that span reads GT. Position 144 (Arg144) interacts with N(2)-acetyl-L-ornithine. 227 to 230 is a pyridoxal 5'-phosphate binding site; that stretch reads DEIQ. At Lys256 the chain carries N6-(pyridoxal phosphate)lysine. Thr284 is a N(2)-acetyl-L-ornithine binding site. Thr285 is a pyridoxal 5'-phosphate binding site.

Belongs to the class-III pyridoxal-phosphate-dependent aminotransferase family. ArgD subfamily. In terms of assembly, homodimer. Requires pyridoxal 5'-phosphate as cofactor.

It localises to the cytoplasm. The catalysed reaction is N(2)-acetyl-L-ornithine + 2-oxoglutarate = N-acetyl-L-glutamate 5-semialdehyde + L-glutamate. Its pathway is amino-acid biosynthesis; L-arginine biosynthesis; N(2)-acetyl-L-ornithine from L-glutamate: step 4/4. This is Acetylornithine aminotransferase from Xanthomonas campestris pv. campestris (strain ATCC 33913 / DSM 3586 / NCPPB 528 / LMG 568 / P 25).